A 201-amino-acid chain; its full sequence is Alpha-1-acid glycoprotein (201 aa).

The first 18 residues, 1-18 (MALPWALAVLSLLPLLHA), serve as a signal peptide directing secretion. N-linked (GlcNAc...) asparagine glycosylation is found at asparagine 25, asparagine 33, asparagine 87, asparagine 93, asparagine 103, and asparagine 169. Cysteines 90 and 183 form a disulfide.

It belongs to the calycin superfamily. Lipocalin family.

The protein localises to the secreted. Functionally, functions as a transport protein in the blood stream. Binds various ligands in the interior of its beta-barrel domain. Appears to function in modulating the activity of the immune system during the acute-phase reaction. This is Alpha-1-acid glycoprotein (ORM1) from Oryctolagus cuniculus (Rabbit).